We begin with the raw amino-acid sequence, 615 residues long: Chaperone protein HscA homolog (615 aa).

Belongs to the heat shock protein 70 family.

In terms of biological role, chaperone involved in the maturation of iron-sulfur cluster-containing proteins. Has a low intrinsic ATPase activity which is markedly stimulated by HscB. The polypeptide is Chaperone protein HscA homolog (Aeromonas salmonicida (strain A449)).